Consider the following 251-residue polypeptide: Cathelicidin-B1 (251 aa).

An N-terminal signal peptide occupies residues 1–20; the sequence is MGRMWASEVLLLLLLGSSRA. Positions 21–211 are excised as a propeptide; that stretch reads VTPGLDVSTA…ELRCRPLRPQ (191 aa). Residues 29–109 are disordered; the sequence is TAPGLDGSIP…TITPKQDGSI (81 aa). Cystine bridges form between C172-C181 and C189-C205.

Belongs to the cathelicidin family. Detected in bursa of Fabricius, in filamentous structures surrounding the basal and lateral surfaces of bursal M cells (at protein level). Detected in bursa of Fabricius, in secretory enterocytes of the interfollicular bursal epithelium, but not in M cells.

Its subcellular location is the secreted. Its function is as follows. Has potent antimicrobial activity against Gram-positive and Gram-negative bacteria (in vitro). May play a role in the innate immune response. In Gallus gallus (Chicken), this protein is Cathelicidin-B1 (CATHB1).